The primary structure comprises 202 residues: Small ribosomal subunit protein uS4c (202 aa).

The region spanning 90 to 165 (MRLDNILFRL…SQKYKIPNHL (76 aa)) is the S4 RNA-binding domain.

The protein belongs to the universal ribosomal protein uS4 family. As to quaternary structure, part of the 30S ribosomal subunit. Contacts protein S5. The interaction surface between S4 and S5 is involved in control of translational fidelity.

It is found in the plastid. The protein localises to the chloroplast. Its function is as follows. One of the primary rRNA binding proteins, it binds directly to 16S rRNA where it nucleates assembly of the body of the 30S subunit. In terms of biological role, with S5 and S12 plays an important role in translational accuracy. The chain is Small ribosomal subunit protein uS4c (rps4) from Diphyscium foliosum (Nut-moss).